A 498-amino-acid chain; its full sequence is Beta-amylase 5 (498 aa).

Residues Asp-56, His-96, and Asp-104 each contribute to the substrate site. The Proton donor role is filled by Glu-189. Residues Lys-298, His-303, and Thr-345 each contribute to the substrate site. Glu-383 serves as the catalytic Proton acceptor. Substrate-binding positions include 384-385 and Arg-423; that span reads NA.

The protein belongs to the glycosyl hydrolase 14 family. In terms of tissue distribution, detected in phloem sieve elements.

The protein localises to the cytoplasm. It catalyses the reaction Hydrolysis of (1-&gt;4)-alpha-D-glucosidic linkages in polysaccharides so as to remove successive maltose units from the non-reducing ends of the chains.. Beta-amylase activity. Major cytosolic beta-amylase isoform in rosette leaves and inflorescences stems. In Arabidopsis thaliana (Mouse-ear cress), this protein is Beta-amylase 5 (BAM5).